A 212-amino-acid polypeptide reads, in one-letter code: MWEQRRQKVVFSLTILVRYRLKQSMAKKISKNSRAARQSDALEPEVKDLSELPRAEKTDLTNILIRTAAKNEALLEAKISKKANKSKRGKKLNKKALEDKLANSISSMDRDRLVKALNFTNRLDGKIAKSISRAKYIQNTRKAGWDSTNETIKKELAFLNGGLSVQAKSASEGNAEKEDEEIPEVFDSLAEDNTVQKTPTNRFGVLPDDVEE.

Disordered regions lie at residues 28 to 48 (KISKNSRAARQSDALEPEVKD) and 188 to 212 (SLAEDNTVQKTPTNRFGVLPDDVEE). Ser188 bears the Phosphoserine mark. Polar residues predominate over residues 191–201 (EDNTVQKTPTN).

It belongs to the ECM1 family. Associates with the pre-60S ribosomal particle and the nucleopore complex.

It localises to the nucleus. The protein localises to the nucleolus. The protein resides in the cytoplasm. In terms of biological role, pre-ribosomal factor involved in 60S ribosomal protein subunit export from the nucleus. This Saccharomyces cerevisiae (strain ATCC 204508 / S288c) (Baker's yeast) protein is Shuttling pre-60S factor ECM1 (ECM1).